Reading from the N-terminus, the 426-residue chain is Glutamate-1-semialdehyde 2,1-aminomutase (426 aa).

The residue at position 265 (Lys265) is an N6-(pyridoxal phosphate)lysine.

It belongs to the class-III pyridoxal-phosphate-dependent aminotransferase family. HemL subfamily. Homodimer. It depends on pyridoxal 5'-phosphate as a cofactor.

It is found in the cytoplasm. The catalysed reaction is (S)-4-amino-5-oxopentanoate = 5-aminolevulinate. It participates in porphyrin-containing compound metabolism; protoporphyrin-IX biosynthesis; 5-aminolevulinate from L-glutamyl-tRNA(Glu): step 2/2. This chain is Glutamate-1-semialdehyde 2,1-aminomutase, found in Alcanivorax borkumensis (strain ATCC 700651 / DSM 11573 / NCIMB 13689 / SK2).